Consider the following 552-residue polypeptide: Carboxypeptidase Y homolog A (552 aa).

A signal peptide spans 1-18 (MRIATSTLLVGAASAAFA). Residues 19 to 133 (PQDGTQRVLN…KLDNYNLRAR (115 aa)) constitute a propeptide that is removed on maturation. 5 disulfides stabilise this stretch: Cys-187-Cys-427, Cys-321-Cys-335, Cys-345-Cys-368, Cys-352-Cys-361, and Cys-390-Cys-397. A glycan (N-linked (GlcNAc...) asparagine) is linked at Asn-218. The active site involves Ser-274. The active site involves Asp-466. Residue Asn-516 is glycosylated (N-linked (GlcNAc...) asparagine). His-527 is an active-site residue.

It belongs to the peptidase S10 family.

The protein resides in the vacuole. It carries out the reaction Release of a C-terminal amino acid with broad specificity.. In terms of biological role, vacuolar carboxypeptidase involved in degradation of small peptides. Digests preferentially peptides containing an aliphatic or hydrophobic residue in P1' position, as well as methionine, leucine or phenylalanine in P1 position of ester substrate. The polypeptide is Carboxypeptidase Y homolog A (CPYA) (Pyricularia oryzae (strain 70-15 / ATCC MYA-4617 / FGSC 8958) (Rice blast fungus)).